The primary structure comprises 465 residues: Transposase for insertion sequence IS1202 (465 aa).

Positions 157 to 340 (HPSRPRKKFA…APNPSERNLI (184 aa)) constitute an Integrase catalytic domain.

In terms of biological role, required for the transposition of the insertion element. In Streptococcus pneumoniae, this protein is Transposase for insertion sequence IS1202.